The primary structure comprises 405 residues: uncharacterized protein (405 aa).

Over 1-18 (MPEPVAEPALNGLRLNLR) the chain is Cytoplasmic. A helical transmembrane segment spans residues 19 to 39 (IVSIVMFNFASYLTIGLPLAV). Residues 40 to 46 (LPGYVHD) lie on the Periplasmic side of the membrane. A helical membrane pass occupies residues 47-67 (VMGFSAFWAGLVISLQYFATL). The Cytoplasmic portion of the chain corresponds to 68-84 (LSRPHAGRYADSLGPKK). Residues 85–105 (IVVFGLCGCFLSGLGYLTAGL) form a helical membrane-spanning segment. Thr-106 is a topological domain (periplasmic). Residues 107-127 (ASLPVISLLLLCLGRVILGIG) form a helical membrane-spanning segment. Topologically, residues 128-155 (QSFAGTGSTLWGVGVVGSLHIGRVISWN) are cytoplasmic. A helical transmembrane segment spans residues 156 to 176 (GIVTYGAMAMGAPLGVVFYHW). Position 177 (Gly-177) is a topological domain, periplasmic. Residues 178-198 (GLQALALIIMGVALVAILLAI) traverse the membrane as a helical segment. Residues 199–223 (PRPTVKASKGKPLPFRAVLGRVWLY) are Cytoplasmic-facing. The chain crosses the membrane as a helical span at residues 224–244 (GMALALASAGFGVIATFITLF). At 245–251 (YDAKGWD) the chain is on the periplasmic side. Residues 252–272 (GAAFALTLFSCAFVGTRLLFP) form a helical membrane-spanning segment. The Cytoplasmic portion of the chain corresponds to 273–282 (NGINRIGGLN). Residues 283–303 (VAMICFSVEIIGLLLVGVATM) traverse the membrane as a helical segment. The Periplasmic portion of the chain corresponds to 304–308 (PWMAK). The chain crosses the membrane as a helical span at residues 309–329 (IGVLLAGAGFSLVFPALGVVA). Residues 330 to 343 (VKAVPQQNQGAALA) lie on the Cytoplasmic side of the membrane. The chain crosses the membrane as a helical span at residues 344-364 (TYTVFMDLSLGVTGPLAGLVM). Residue Ser-365 is a topological domain, periplasmic. A helical membrane pass occupies residues 366–386 (WAGVPVIYLAAAGLVAIALLL). At 387-405 (TWRLKKRPPEHVPEAASSS) the chain is on the cytoplasmic side.

This sequence belongs to the major facilitator superfamily. YhhS family.

The protein resides in the cell inner membrane. Functionally, confers high-level resistance to glyphosate when overexpressed. Overexpression has no effect on intracellular arabinose concentrations. This is an uncharacterized protein from Escherichia coli (strain K12).